The sequence spans 312 residues: Olfactory receptor 2M3 (312 aa).

Residues methionine 1–threonine 25 lie on the Extracellular side of the membrane. N-linked (GlcNAc...) asparagine glycosylation occurs at asparagine 5. A helical transmembrane segment spans residues phenylalanine 26–isoleucine 49. Residues tyrosine 50–threonine 57 are Cytoplasmic-facing. The chain crosses the membrane as a helical span at residues proline 58–proline 79. Residues lysine 80–glutamine 100 are Extracellular-facing. A disulfide bond links cysteine 97 and cysteine 189. A helical membrane pass occupies residues isoleucine 101–tyrosine 120. Residues aspartate 121–lysine 139 are Cytoplasmic-facing. A helical transmembrane segment spans residues isoleucine 140–isoleucine 158. At aspartate 159–phenylalanine 195 the chain is on the extracellular side. The helical transmembrane segment at glutamate 196–alanine 219 threads the bilayer. At arginine 220–lysine 236 the chain is on the cytoplasmic side. The chain crosses the membrane as a helical span at residues alanine 237 to tyrosine 259. Residues isoleucine 260–lysine 272 lie on the Extracellular side of the membrane. The helical transmembrane segment at methionine 273–leucine 292 threads the bilayer. Over arginine 293–glutamate 312 the chain is Cytoplasmic.

It belongs to the G-protein coupled receptor 1 family.

It localises to the cell membrane. Functionally, odorant receptor. The polypeptide is Olfactory receptor 2M3 (OR2M3) (Homo sapiens (Human)).